A 438-amino-acid polypeptide reads, in one-letter code: Histidinol dehydrogenase (438 aa).

NAD(+) contacts are provided by Tyr129, Gln193, and Asn216. Substrate contacts are provided by Thr239, Gln261, and His264. Zn(2+) is bound by residues Gln261 and His264. Catalysis depends on proton acceptor residues Glu330 and His331. Residues His331, Asp364, Glu418, and His423 each contribute to the substrate site. Zn(2+) is bound at residue Asp364. Zn(2+) is bound at residue His423.

This sequence belongs to the histidinol dehydrogenase family. It depends on Zn(2+) as a cofactor.

The enzyme catalyses L-histidinol + 2 NAD(+) + H2O = L-histidine + 2 NADH + 3 H(+). The protein operates within amino-acid biosynthesis; L-histidine biosynthesis; L-histidine from 5-phospho-alpha-D-ribose 1-diphosphate: step 9/9. Its function is as follows. Catalyzes the sequential NAD-dependent oxidations of L-histidinol to L-histidinaldehyde and then to L-histidine. The polypeptide is Histidinol dehydrogenase (Thermobifida fusca (strain YX)).